The primary structure comprises 195 residues: Probable nicotinate-nucleotide adenylyltransferase (195 aa).

It belongs to the NadD family.

It catalyses the reaction nicotinate beta-D-ribonucleotide + ATP + H(+) = deamido-NAD(+) + diphosphate. The protein operates within cofactor biosynthesis; NAD(+) biosynthesis; deamido-NAD(+) from nicotinate D-ribonucleotide: step 1/1. Its function is as follows. Catalyzes the reversible adenylation of nicotinate mononucleotide (NaMN) to nicotinic acid adenine dinucleotide (NaAD). The polypeptide is Probable nicotinate-nucleotide adenylyltransferase (Opitutus terrae (strain DSM 11246 / JCM 15787 / PB90-1)).